Here is a 669-residue protein sequence, read N- to C-terminus: MMRLRGSGMLRDLLLRSPAGVSATLRRAQPLVTLCRRPRGGGRPAAGPAAAARLHPWWGGGGWPAEPLARGLSSSPSEILQELGKGSTHPQPGVSPPAAPAAPGPKDGPGETDAFGNSEGKELVASGENKIKQGLLPSLEDLLFYTIAEGQEKIPVHKFITALKSTGLRTSDPRLKECMDMLRLTLQTTSDGVMLDKDLFKKCVQSNIVLLTQAFRRKFVIPDFMSFTSHIDELYESAKKQSGGKVADYIPQLAKFSPDLWGVSVCTVDGQRHSTGDTKVPFCLQSCVKPLKYAIAVNDLGTEYVHRYVGKEPSGLRFNKLFLNEDDKPHNPMVNAGAIVVTSLIKQGVNNAEKFDYVMQFLNKMAGNEYVGFSNATFQSERESGDRNFAIGYYLKEKKCFPEGTDMVGILDFYFQLCSIEVTCESASVMAATLANGGFCPITGERVLSPEAVRNTLSLMHSCGMYDFSGQFAFHVGLPAKSGVAGGILLVVPNVMGMMCWSPPLDKMGNSVKGIHFCHDLVSLCNFHNYDNLRHFAKKLDPRREGGDQRVKSVINLLFAAYTGDVSALRRFALSAMDMEQRDYDSRTALHVAAAEGHVEVVKFLLEACKVNPFPKDRWNNTPMDEALHFGHHDVFKILQEYQVQYTPQGDSDNGKENQTVHKNLDGLL.

The transit peptide at 1-54 (MMRLRGSGMLRDLLLRSPAGVSATLRRAQPLVTLCRRPRGGGRPAAGPAAAARL) directs the protein to the mitochondrion. Residues 68–118 (LARGLSSSPSEILQELGKGSTHPQPGVSPPAAPAAPGPKDGPGETDAFGNS) are disordered. Positions 93–103 (GVSPPAAPAAP) are enriched in pro residues. 2 positions are modified to N6-succinyllysine: Lys-130 and Lys-164. Ser-286 is a binding site for substrate. N6-acetyllysine is present on Lys-311. Residues 315-322 (GLRFNKLF) are highly mobile activation loop. Residues Asn-335, Glu-381, Asn-388, Tyr-414, Tyr-466, and Val-484 each coordinate substrate. ANK repeat units follow at residues 585–614 (DSRT…VNPF) and 619–648 (WNNT…QYTP). A disordered region spans residues 647–669 (TPQGDSDNGKENQTVHKNLDGLL). Phosphoserine is present on Ser-652. Over residues 653-669 (DNGKENQTVHKNLDGLL) the composition is skewed to basic and acidic residues.

The protein belongs to the glutaminase family. Homotetramer, dimer of dimers. The tetramers can assemble into rod-like oligomers (in vitro), but the physiological significance of this is not clear. Interacts with RAF1 and MAP2K2. Interacts with ATCAY; the interaction is direct and may control GLS localization, negatively regulating its activity. Post-translationally, synthesized as a 74-kDa cytosolic precursor which is proteolytically processed by the mitochondrial-processing peptidase (MPP) via a 72-kDa intermediate to yield the mature mitochondrial 68- and 65-kDa subunits. Isoform 1 and isoform 3 are detected in brain cortex. Isoform 3 is highly expressed in astrocytoma, ganglioglioma and ependymoma. Isoform 1 is highly expressed in brain and kidney, but not detected in liver. Isoform 3 is highly expressed in heart and pancreas, detected at lower levels in placenta, lung, pancreas and kidney, but is not detected in liver. Isoform 2 is expressed in cardiac and skeletal muscle.

Its subcellular location is the mitochondrion. The protein resides in the cytoplasm. It localises to the cytosol. The protein localises to the mitochondrion matrix. The enzyme catalyses L-glutamine + H2O = L-glutamate + NH4(+). Its activity is regulated as follows. Isoform 1 and isoform 3 are activated by phosphate. Inhibited by BPTES. BPTES binds between subunits and favors dissociation of the tetramer into dimers. Inhibited by 6-diazo-5-oxo-L-norleucine (DON). Enzyme activity is stimulated by phosphorylation. Its function is as follows. Catalyzes the first reaction in the primary pathway for the renal catabolism of glutamine. Plays a role in maintaining acid-base homeostasis. Regulates the levels of the neurotransmitter glutamate, the main excitatory neurotransmitter in the brain. Lacks catalytic activity. This chain is Glutaminase kidney isoform, mitochondrial (GLS), found in Homo sapiens (Human).